The primary structure comprises 160 residues: Protein max (160 aa).

Residues 1 to 13 (MSDNDDIEVESDE) are compositionally biased toward acidic residues. The disordered stretch occupies residues 1 to 40 (MSDNDDIEVESDEEQPRFQSAADKRAHHNALERKRRDHIK). Ser2 bears the N-acetylserine mark. 2 positions are modified to phosphoserine: Ser2 and Ser11. The 52-residue stretch at 23–74 (DKRAHHNALERKRRDHIKDSFHSLRDSVPSLQGEKASRAQILDKATEYIQYM) folds into the bHLH domain. Positions 29-40 (NALERKRRDHIK) are enriched in basic and acidic residues. At Lys66 the chain carries N6-acetyllysine. The tract at residues 81–102 (HQQDIDDLKRQNALLEQQVRAL) is leucine-zipper. A disordered region spans residues 104-160 (KARSSAQLQTNYPSSDNSLYTNAKGGTISAFDGGSDSSSESEPEEPQSRKKLRMEAS). Ser107 is subject to Phosphoserine. Polar residues predominate over residues 107-124 (SSAQLQTNYPSSDNSLYT). Residues Lys153 and Lys154 each carry the N6-acetyllysine modification.

Belongs to the MAX family. In terms of assembly, efficient DNA binding requires dimerization with another bHLH protein. Binds DNA as a heterodimer with MYC or MAD. Part of the E2F6.com-1 complex in G0 phase composed of E2F6, MGA, MAX, TFDP1, CBX3, BAT8, EUHMTASE1, RING1, RNF2, MBLR, L3MBTL2 and YAF2. Component of some MLL1/MLL complex, at least composed of the core components KMT2A/MLL1, ASH2L, HCFC1/HCF1, WDR5 and RBBP5, as well as the facultative components BACC1, CHD8, E2F6, HSP70, INO80C, KANSL1, LAS1L, MAX, MCRS1, MGA, MYST1/MOF, PELP1, PHF20, PRP31, RING2, RUVB1/TIP49A, RUVB2/TIP49B, SENP3, TAF1, TAF4, TAF6, TAF7, TAF9 and TEX10. Interacts with SPAG9. The heterodimer MYC:MAX interacts with ABI1; the interaction may enhance MYC:MAX transcriptional activity. In terms of processing, phosphorylated.

It localises to the nucleus. Its subcellular location is the cell projection. The protein localises to the dendrite. Functionally, transcription regulator. Forms a sequence-specific DNA-binding protein complex with MYC or MAD which recognizes the core sequence 5'-CAC[GA]TG-3'. The MYC:MAX complex is a transcriptional activator, whereas the MAD:MAX complex is a repressor. CpG methylation of the recognition site greatly inhibits DNA binding, suggesting that DNA methylation may regulate the MYC:MAX complex in vivo. May repress transcription via the recruitment of a chromatin remodeling complex containing H3 'Lys-9' histone methyltransferase activity. Represses MYC transcriptional activity from E-box elements. The protein is Protein max of Mus musculus (Mouse).